Here is a 270-residue protein sequence, read N- to C-terminus: Putative phosphoenolpyruvate synthase regulatory protein (270 aa).

ADP is bound at residue 150 to 157 (GVSRCGKT).

This sequence belongs to the pyruvate, phosphate/water dikinase regulatory protein family. PSRP subfamily.

The catalysed reaction is [pyruvate, water dikinase] + ADP = [pyruvate, water dikinase]-phosphate + AMP + H(+). It carries out the reaction [pyruvate, water dikinase]-phosphate + phosphate + H(+) = [pyruvate, water dikinase] + diphosphate. Bifunctional serine/threonine kinase and phosphorylase involved in the regulation of the phosphoenolpyruvate synthase (PEPS) by catalyzing its phosphorylation/dephosphorylation. In Shewanella woodyi (strain ATCC 51908 / MS32), this protein is Putative phosphoenolpyruvate synthase regulatory protein.